A 95-amino-acid polypeptide reads, in one-letter code: RING finger protein Z (95 aa).

Gly-2 carries the N-myristoyl glycine; by host lipid modification. The RING-type; atypical zinc-finger motif lies at 38–74 (CKSCWFANKGLLKCSNHYLCLKCLTLMLRRSDYCGIC). A PTAP/PSAP motif motif is present at residues 88 to 91 (PSAP).

It belongs to the arenaviridae Z protein family. In terms of assembly, interacts with protein NP; this interaction probably directs the encapsidated genome to budding sites. Interacts (via RING domain) with polymerase L; this interaction inhibits viral transcription and replication, Z partially blocks the product exit tunnel for the releasing nascent RNA product. Interacts with the glycoprotein complex; this interaction plays a role in virion budding. Interacts with host eIF4E; this interaction results in eIF4E reduced affinity for its substrate, the 5'-m7 G cap structure. Interacts (via late-budding domain) with host TSG101; this interaction is essential for budding and release of viral particles. Interacts with host RPLP0; this interaction may serve to load ribosome-like particles inside the virion. Interacts with host PML; this interaction induces PML bodies redistribution in the cytoplasm upon viral infection. Post-translationally, myristoylation is required for the role of RING finger protein Z in assembly and budding.

It localises to the virion. It is found in the host cytoplasm. The protein localises to the host perinuclear region. Its subcellular location is the host cell membrane. Functionally, plays a crucial role in virion assembly and budding. Expressed late in the virus life cycle, it acts as an inhibitor of viral transcription and RNA synthesis by interacting with the viral polymerase L. Presumably recruits the NP encapsidated genome to cellular membranes at budding sites via direct interaction with NP. Plays critical roles in the final steps of viral release by interacting with host TSG101, a member of the vacuolar protein-sorting pathway and using other cellular host proteins involved in vesicle formation pathway. The budding of the virus progeny occurs after association of protein Z with the viral glycoprotein complex SSP-GP1-GP2 at the cell periphery, step that requires myristoylation of protein Z. Also selectively represses protein production by associating with host eIF4E. In cell-based minigenome assay, has an inhibitory effect on the ribonucleoprotein machinery (vRNP), which is responsible for the replication and transcription of the viral genome. This is RING finger protein Z from Neotoma (wood rats).